A 91-amino-acid polypeptide reads, in one-letter code: Dynein light chain 1, cytoplasmic (91 aa).

This sequence belongs to the dynein light chain family. Homodimer. Cytoplasmic dynein consists of two catalytic heavy chains (HCs) and a number of non-catalytic subunits which present intermediate chains (ICs), light intermediate chains (LICs) and light chains (LCs). Component of the nuclear pore complex (NPC). NPC constitutes the exclusive means of nucleocytoplasmic transport. NPCs allow the passive diffusion of ions and small molecules and the active, nuclear transport receptor-mediated bidirectional transport of macromolecules such as proteins, RNAs, ribonucleoparticles (RNPs), and ribosomal subunits across the nuclear envelope. Due to its 8-fold rotational symmetry, all subunits are present with 8 copies or multiples thereof.

The protein resides in the cytoplasm. It is found in the cytoskeleton. Its subcellular location is the nucleus. The protein localises to the nuclear pore complex. Acts as one of several non-catalytic accessory components of the cytoplasmic dynein complex that are thought to be involved in linking dynein to cargos and to adapter proteins that regulate dynein function. Cytoplasmic dynein 1 acts as a motor for the intracellular retrograde motility of vesicles and organelles along microtubules. May play a role in changing or maintaining the spatial distribution of cytoskeletal structures. Also a component of the nuclear pore complex. This Debaryomyces hansenii (strain ATCC 36239 / CBS 767 / BCRC 21394 / JCM 1990 / NBRC 0083 / IGC 2968) (Yeast) protein is Dynein light chain 1, cytoplasmic (DYN2).